The following is a 276-amino-acid chain: Diaminopimelate epimerase (276 aa).

Positions 13, 46, and 66 each coordinate substrate. Catalysis depends on Cys75, which acts as the Proton donor. Residues 76 to 77 (GN), Asn159, Asn192, and 210 to 211 (ER) each bind substrate. Cys219 (proton acceptor) is an active-site residue. Position 220-221 (220-221 (GS)) interacts with substrate.

It belongs to the diaminopimelate epimerase family. As to quaternary structure, homodimer.

The protein localises to the cytoplasm. The enzyme catalyses (2S,6S)-2,6-diaminopimelate = meso-2,6-diaminopimelate. The protein operates within amino-acid biosynthesis; L-lysine biosynthesis via DAP pathway; DL-2,6-diaminopimelate from LL-2,6-diaminopimelate: step 1/1. Functionally, catalyzes the stereoinversion of LL-2,6-diaminopimelate (L,L-DAP) to meso-diaminopimelate (meso-DAP), a precursor of L-lysine and an essential component of the bacterial peptidoglycan. The sequence is that of Diaminopimelate epimerase from Vibrio vulnificus (strain CMCP6).